Here is a 283-residue protein sequence, read N- to C-terminus: Peflin (283 aa).

8 repeat units span residues 21-30 (PQTNYYGGQQ), 36-44 (QPAASYGRP), 45-54 (APGAPYGSPP), 55-62 (SGGVYGHP), 71-79 (APGGPYGGQ), 80-87 (APGGPYSV), 88-95 (PGSTPYGS), and 96-104 (QQHGSYGQG). Residues 21 to 104 (PQTNYYGGQQ…SQQHGSYGQG (84 aa)) are 8 X 9 AA approximate tandem repeat of [AP]-P-G-G-P-Y-G-G-P-P. Positions 37–70 (PAASYGRPAPGAPYGSPPSGGVYGHPVPGSAAPG) are enriched in low complexity. Residues 37-113 (PAASYGRPAP…GAPAGNIPPG (77 aa)) are disordered. Positions 71 to 81 (APGGPYGGQAP) are enriched in gly residues. Low complexity predominate over residues 93 to 104 (YGSQQHGSYGQG). EF-hand domains lie at 113–148 (GVDPEAFSWFQTVDTDHSGYISLKELKQALVNTNWS), 154–179 (TCTMMMNMFDKSNSGRIDMFGFSALW), 180–215 (RFIQQWRNLFQQYDRDRSGSINQGELHQALCQMGYQ), 216–252 (LSPQFVQIVMSRYAQRSAQPGLQLDRFIQICTQLQSM), and 253–282 (TEAFREKDTGQIGTAKLSYEDFITMTTTRL). Aspartate 126, aspartate 128, serine 130, tyrosine 132, and glutamate 137 together coordinate Ca(2+). Positions 193, 195, 197, 199, and 204 each coordinate Ca(2+).

As to quaternary structure, heterodimer; heterodimerizes (via the EF-hand 5) with pdcd6.

It localises to the cytoplasm. It is found in the endoplasmic reticulum. The protein localises to the membrane. The protein resides in the cytoplasmic vesicle. Its subcellular location is the COPII-coated vesicle membrane. Its function is as follows. Calcium-binding protein that acts as an adapter that bridges unrelated proteins or stabilizes weak protein-protein complexes in response to calcium. Acts as a negative regulator of ER-Golgi transport. The chain is Peflin from Xenopus laevis (African clawed frog).